A 197-amino-acid chain; its full sequence is Segregation and condensation protein B (197 aa).

Belongs to the ScpB family. Homodimer. Homodimerization may be required to stabilize the binding of ScpA to the Smc head domains. Component of a cohesin-like complex composed of ScpA, ScpB and the Smc homodimer, in which ScpA and ScpB bind to the head domain of Smc. The presence of the three proteins is required for the association of the complex with DNA.

The protein resides in the cytoplasm. Its function is as follows. Participates in chromosomal partition during cell division. May act via the formation of a condensin-like complex containing Smc and ScpA that pull DNA away from mid-cell into both cell halves. The protein is Segregation and condensation protein B of Malacoplasma penetrans (strain HF-2) (Mycoplasma penetrans).